A 219-amino-acid chain; its full sequence is Ribose-5-phosphate isomerase A (219 aa).

Residues 28–31, 81–84, and 94–97 each bind substrate; these read SGST, DGAD, and KGGG. The Proton acceptor role is filled by Glu103. Lys121 provides a ligand contact to substrate.

This sequence belongs to the ribose 5-phosphate isomerase family. As to quaternary structure, homodimer.

The catalysed reaction is aldehydo-D-ribose 5-phosphate = D-ribulose 5-phosphate. The protein operates within carbohydrate degradation; pentose phosphate pathway; D-ribose 5-phosphate from D-ribulose 5-phosphate (non-oxidative stage): step 1/1. Catalyzes the reversible conversion of ribose-5-phosphate to ribulose 5-phosphate. The protein is Ribose-5-phosphate isomerase A of Haemophilus ducreyi (strain 35000HP / ATCC 700724).